The chain runs to 688 residues: Methionine--tRNA ligase (688 aa).

The 'HIGH' region motif lies at 13 to 23; that stretch reads PYANGNFHIGH. 4 residues coordinate Zn(2+): Cys-144, Cys-147, Cys-157, and Cys-160. The 'KMSKS' region motif lies at 342 to 346; it reads KMSKS. ATP is bound at residue Lys-345. A tRNA-binding domain is found at 582 to 688; that stretch reads DFAKVDLRIA…PGAQPGMRIH (107 aa).

This sequence belongs to the class-I aminoacyl-tRNA synthetase family. MetG type 1 subfamily. Homodimer. It depends on Zn(2+) as a cofactor.

The protein localises to the cytoplasm. It carries out the reaction tRNA(Met) + L-methionine + ATP = L-methionyl-tRNA(Met) + AMP + diphosphate. Is required not only for elongation of protein synthesis but also for the initiation of all mRNA translation through initiator tRNA(fMet) aminoacylation. This Acidovorax ebreus (strain TPSY) (Diaphorobacter sp. (strain TPSY)) protein is Methionine--tRNA ligase.